We begin with the raw amino-acid sequence, 923 residues long: MPFAIGQRWLSESENALGLGVITALDQRTVTIYFPAADETRIYAIAQAPLSRIVFSKGETLSHQAGWQGEILDVQNMNGLLFYLVKNPQDEDVIVQERDISPIISFSQAKDRLFSAQIDRSTHFALRYRTLCHQQAQFKSPLRGLRGTRAGLIPHQLHIAAEVGNRVNPRVLLADEVGLGKTIEAGMILQNQLFAEKVQRVLIIVPETLQHQWLVEMLRRFNLHFALFDEERCNDFDLDAVNPFTTESLIICSLNWLETHPNRVEQALDAQFDCLIVDEAHHLVWSETSPSAAYLFVEQLARIIPSVLLLTATPEQLGQESHFARLRLLDPERFFDYQTFVKEQEHYQPVVNAVESLLANKALSAVEKNHISDLLLEQDVEPLFKAIASNNDEEQQRARQELIQALIDRHGTGRMLFRNTRQGVKGFPHRVYHQITLSEENDKIDWLIDFLKLHRDEKIFVICQTAATAIQLEQILREREAIRAAVFHEKMSIIERDRAAAYFADLENGAQVLLSSSIGSEGRNFQFAANLVLFDLPTNPDLLEQCIGRLDRIGQKRDVQIYMPCAKDSPQSRLARWYNEGLNAFEQTCPMGMALFSQFADELEKVRSNSTALSENEFSGLLKQTKTAREKLKIELEKGRDRLLELNSHGGEQAQALADQIADEDNSPELVNFALKLFDIIGVEQEDLGANSIVISPTGTMLVPDFPGLKEEGVTVTFDRELALAREEMEFLTWDHPMIRQGIDLVASGDIGKAAMALLVNKQLPAGTLLIELIYVVESQSPKGLQLNRFLPPTPIRLLLDNKGNNMGEQVAFETLHSKLKPLGKNIANQMVKMARSNIESLITRGDQLVKSLAEPIIAEAKNQADQQLSAEINRLQALRAVNKNIRQSEIDILEQQRTQSLDELSKANWRLDCLRVIVTNKE.

Positions 162–332 constitute a Helicase ATP-binding domain; the sequence is EVGNRVNPRV…FARLRLLDPE (171 aa). 175 to 182 serves as a coordination point for ATP; that stretch reads DEVGLGKT. The short motif at 278-281 is the DEAH box element; it reads DEAH. The Helicase C-terminal domain occupies 443-597; the sequence is KIDWLIDFLK…TCPMGMALFS (155 aa).

It belongs to the SNF2/RAD54 helicase family. RapA subfamily. In terms of assembly, interacts with the RNAP. Has a higher affinity for the core RNAP than for the holoenzyme. Its ATPase activity is stimulated by binding to RNAP.

In terms of biological role, transcription regulator that activates transcription by stimulating RNA polymerase (RNAP) recycling in case of stress conditions such as supercoiled DNA or high salt concentrations. Probably acts by releasing the RNAP, when it is trapped or immobilized on tightly supercoiled DNA. Does not activate transcription on linear DNA. Probably not involved in DNA repair. In Haemophilus influenzae (strain PittEE), this protein is RNA polymerase-associated protein RapA.